The chain runs to 182 residues: Large ribosomal subunit protein uL10 (182 aa).

Belongs to the universal ribosomal protein uL10 family. In terms of assembly, part of the ribosomal stalk of the 50S ribosomal subunit. The N-terminus interacts with L11 and the large rRNA to form the base of the stalk. The C-terminus forms an elongated spine to which L12 dimers bind in a sequential fashion forming a multimeric L10(L12)X complex.

Its function is as follows. Forms part of the ribosomal stalk, playing a central role in the interaction of the ribosome with GTP-bound translation factors. This chain is Large ribosomal subunit protein uL10, found in Leptothrix cholodnii (strain ATCC 51168 / LMG 8142 / SP-6) (Leptothrix discophora (strain SP-6)).